The sequence spans 221 residues: Octanoyltransferase (221 aa).

The region spanning 29-208 is the BPL/LPL catalytic domain; that stretch reads DEIPDTCLLL…RLTEFLLPAR (180 aa). Substrate-binding positions include 67 to 74, 138 to 140, and 151 to 153; these read RGGRITWH, AIG, and GFA. Cys169 acts as the Acyl-thioester intermediate in catalysis.

It belongs to the LipB family.

The protein localises to the cytoplasm. It catalyses the reaction octanoyl-[ACP] + L-lysyl-[protein] = N(6)-octanoyl-L-lysyl-[protein] + holo-[ACP] + H(+). It functions in the pathway protein modification; protein lipoylation via endogenous pathway; protein N(6)-(lipoyl)lysine from octanoyl-[acyl-carrier-protein]: step 1/2. Its function is as follows. Catalyzes the transfer of endogenously produced octanoic acid from octanoyl-acyl-carrier-protein onto the lipoyl domains of lipoate-dependent enzymes. Lipoyl-ACP can also act as a substrate although octanoyl-ACP is likely to be the physiological substrate. This chain is Octanoyltransferase, found in Acidothermus cellulolyticus (strain ATCC 43068 / DSM 8971 / 11B).